A 371-amino-acid polypeptide reads, in one-letter code: Peptidyl-prolyl cis-trans isomerase D (371 aa).

A PPIase cyclophilin-type domain is found at 8–172 (FFDIAIGGQL…EPVVIADCGQ (165 aa)). The interval 175-202 (SDDPFLAERTSTDGDPYEDYPDDEDQEL) is disordered. Positions 189–201 (DPYEDYPDDEDQE) are enriched in acidic residues. TPR repeat units lie at residues 212-245 (AKTIREVANRLYKQGDISGALQKYSKSIRYLDVH), 265-303 (APLLLNSALAAIRIEPHSAANAMNAVANTSRALNRLELS), and 308-341 (AKAYYRRGLAKTIMRDEVGAEQDLKTANELLPED).

Belongs to the cyclophilin-type PPIase family. PPIase D subfamily.

The protein localises to the cytoplasm. The catalysed reaction is [protein]-peptidylproline (omega=180) = [protein]-peptidylproline (omega=0). PPIases accelerate the folding of proteins. It catalyzes the cis-trans isomerization of proline imidic peptide bonds in oligopeptides. This Amanita muscaria (Fly agaric) protein is Peptidyl-prolyl cis-trans isomerase D (Cyp40).